The following is a 184-amino-acid chain: KSAAXVTLDLFGDWRAKRHDNAQLLTGINLNGQTLGIAFMSKXSVGLIQDYXKSYLLVASVMAHELGHNLGMEHDDGNCICPAKCIDNKPLRTDIVSPAVCGNYFVELTPGSQCADGVCCDQCRKAGVTVAPDLCFDYNQLGTEDKFTHSPDDPDYGMVDLGTKCADGKVCNSNRQCVDVNTAY.

A Peptidase M12B domain is found at 1–90; that stretch reads KSAAXVTLDL…CPAKCIDNKP (90 aa). Residue Asp20 participates in Ca(2+) binding. His64 contributes to the Zn(2+) binding site. Residue Glu65 is part of the active site. His68 and His74 together coordinate Zn(2+). Asn88, Val100, Asn103, Phe105, and Glu107 together coordinate Ca(2+). One can recognise a Disintegrin domain in the interval 98–124; sequence PAVCGNYFVELTPGSQCADGVCCDQCR. Cystine bridges form between Cys114/Cys120 and Cys165/Cys177.

It belongs to the venom metalloproteinase (M12B) family. P-III subfamily. P-IIIc sub-subfamily. In terms of assembly, heterodimer; disulfide-linked. Zn(2+) is required as a cofactor. The N-terminus is blocked. Post-translationally, N-glycosylated. In terms of tissue distribution, expressed by the venom gland.

The protein localises to the secreted. With respect to regulation, inhibited by EDTA, DTT and zinc ions. Partially inhibited by L-cysteine. Not inhibited by 2-propanol or PMSF. Activity is enhanced by calcium or magnesium ions. Its function is as follows. Snake venom zinc metalloprotease that has fibrinogenolytic and hemorrhagic activities in mouse and rats. Hydrolyzes the Aalpha-chain (FGA) and more slowly the Bbeta-chain of fibrinogen (FGB), without affecting the gamma-chain. Its hemorrhagic activity results of its involvement in cleavage of basal membrane components (nidogen and fibronectin but not laminin) and depletion of fibrinogen, prothrombin (F2) and factor X (F10) in blood circulation. Also possess potent azocaseinolytic activity and cleaves insulin B-chain, hydrolyzing it at positions Gln(4)-His(5), His(10)-Leu(11) and Tyr(16)-Leu(17). This is Zinc metalloproteinase-disintegrin-like ammodytagin from Vipera ammodytes ammodytes (Western sand viper).